An 816-amino-acid chain; its full sequence is H(+)/Cl(-) exchange transporter 5 (816 aa).

Topologically, residues 1–124 (MAMWQGAMDN…WALIHSVSDA (124 aa)) are cytoplasmic. The next 2 membrane-spanning stretches (helical) occupy residues 125 to 162 (FSGW…ICTG) and 208 to 231 (VNYF…VKVF). The Selectivity filter part_1 motif lies at 237 to 241 (GSGIP). Serine 238 contacts chloride. The helical intramembrane region spans 240 to 247 (IPEIKTIL). A run of 2 helical transmembrane segments spans residues 256 to 275 (LGKW…VSSG) and 281 to 300 (EGPL…HRFN). The short motif at 279 to 283 (GKEGP) is the Selectivity filter part_2 element. 2 consecutive intramembrane regions (helical) follow at residues 312-324 (VLSA…VSVA) and 328-336 (PIGGVLFSL). Helical transmembrane passes span 348–366 (LWRS…RSIN), 389–414 (LVPF…IAWC), 422–442 (LGKY…ILAF), 498–518 (MWQL…TFGM), and 523–542 (GLFI…LGVG). The short motif at 523 to 527 (GLFIP) is the Selectivity filter part_3 element. Phenylalanine 525 is a binding site for chloride. An intramembrane region (helical) is located at residues 570–584 (GLYAMVGAAACLGGV). The note=Loop between two helices intramembrane region spans 585–587 (TRM). The helical intramembrane region spans 588–599 (TVSLVVIMFELT). The segment at residues 600–604 (GGLEY) is an intramembrane region (note=Loop between two helices). Residues 605-622 (IVPLMAAAMTSKWVADAL) form a helical membrane-spanning segment. At 623–816 (GREGIYDAHI…NQDPDSILFN (194 aa)) the chain is on the cytoplasmic side. Tyrosine 628 is a binding site for chloride. 2 consecutive CBS domains span residues 656 to 720 (MKPR…ARKK) and 752 to 812 (ILDL…DPDS). ATP-binding positions include threonine 666, 687 to 689 (YSG), and 794 to 797 (TKKD).

The protein belongs to the chloride channel (TC 2.A.49) family. ClC-5/CLCN5 subfamily. Interacts with NEDD4 and NEDD4L. Post-translationally, ubiquitinated by NEDD4L in the presence of albumin; which promotes endocytosis and proteasomal degradation.

It localises to the golgi apparatus membrane. Its subcellular location is the endosome membrane. The protein resides in the cell membrane. It catalyses the reaction 2 chloride(in) + H(+)(out) = 2 chloride(out) + H(+)(in). Functionally, proton-coupled chloride transporter. Functions as antiport system and exchanges chloride ions against protons. Important for normal acidification of the endosome lumen. May play an important role in renal tubular function. The CLC channel family contains both chloride channels and proton-coupled anion transporters that exchange chloride or another anion for protons. The absence of conserved gating glutamate residues is typical for family members that function as channels. In Oryctolagus cuniculus (Rabbit), this protein is H(+)/Cl(-) exchange transporter 5 (CLCN5).